The chain runs to 324 residues: NADH-cytochrome b5 reductase 1 (324 aa).

Residues 49–69 form a helical membrane-spanning segment; it reads LNIVLAFVVGLIGSVVVLLYF. The region spanning 81–184 is the FAD-binding FR-type domain; it reads TQWQQYRLME…KGPKGQMRYA (104 aa). FAD-binding positions include 164–179 and 190–222; these read GSMKIGDLLSVKGPKG and HIGMIAGGTGLTPCLQIIRAALKNPADKTQIDF.

This sequence belongs to the flavoprotein pyridine nucleotide cytochrome reductase family. In terms of assembly, monomer. Component of the 2-(3-amino-3-carboxypropyl)histidine synthase complex composed of DPH1, DPH2, DPH3 and a NADH-dependent reductase, predominantly CBR1. FAD is required as a cofactor.

It is found in the mitochondrion outer membrane. It catalyses the reaction 2 Fe(III)-[cytochrome b5] + NADH = 2 Fe(II)-[cytochrome b5] + NAD(+) + H(+). It carries out the reaction 2 Fe(3+)-[Dph3] + NADH = 2 Fe(2+)-[Dph3] + NAD(+) + H(+). It participates in protein modification; peptidyl-diphthamide biosynthesis. Its function is as follows. NADH-dependent reductase for DPH3 and cytochrome b5. Required for the first step of diphthamide biosynthesis, a post-translational modification of histidine which occurs in elongation factor 2. DPH1 and DPH2 transfer a 3-amino-3-carboxypropyl (ACP) group from S-adenosyl-L-methionine (SAM) to a histidine residue, the reaction is assisted by a reduction system comprising DPH3 and a NADH-dependent reductase, predominantly CBR1. By reducing DPH3, also involved in the formation of the tRNA wobble base modification mcm5s 2U (5-methoxycarbonylmethyl-2-thiouridine), mediated by the elongator complex. The cytochrome b5/NADH cytochrome b5 reductase electron transfer system supports the catalytic activity of several sterol biosynthetic enzymes. The protein is NADH-cytochrome b5 reductase 1 (CBR1) of Mycosarcoma maydis (Corn smut fungus).